Reading from the N-terminus, the 99-residue chain is Large ribosomal subunit protein uL23 (99 aa).

Belongs to the universal ribosomal protein uL23 family. In terms of assembly, part of the 50S ribosomal subunit. Contacts protein L29, and trigger factor when it is bound to the ribosome.

One of the early assembly proteins it binds 23S rRNA. One of the proteins that surrounds the polypeptide exit tunnel on the outside of the ribosome. Forms the main docking site for trigger factor binding to the ribosome. The protein is Large ribosomal subunit protein uL23 of Shewanella sediminis (strain HAW-EB3).